We begin with the raw amino-acid sequence, 415 residues long: Fructose-1,6-bisphosphatase, chloroplastic (415 aa).

Residues 1-57 constitute a chloroplast transit peptide; that stretch reads MASIGPATTTAVKLRSSIFNPQSSTLSPSQQCITFTKSLHSFPTATRHNVASGVRCM. Positions 135, 164, 185, 187, and 188 each coordinate Mg(2+). Residue 188 to 191 coordinates substrate; the sequence is DGSS. Residues 207–232 are involved in light regulation; that stretch reads SPNDECIVDSDHDDESQLSAEEQRCV. Cysteines 231 and 236 form a disulfide. Substrate-binding residues include N295, Y327, Y345, Y347, and K357. E363 provides a ligand contact to Mg(2+).

This sequence belongs to the FBPase class 1 family. Homotetramer. The cofactor is Mg(2+).

The protein localises to the plastid. It is found in the chloroplast. The catalysed reaction is beta-D-fructose 1,6-bisphosphate + H2O = beta-D-fructose 6-phosphate + phosphate. It participates in carbohydrate biosynthesis; Calvin cycle. The sequence is that of Fructose-1,6-bisphosphatase, chloroplastic from Spinacia oleracea (Spinach).